Consider the following 307-residue polypeptide: MPKKCRHLLQTSDLSLDEIKLLLKKASVYANDFNAVSLETKEKMHNKIIVALFFENSTRTVSSFEIASLRLGAKIVKLNMQTSSASKGETLTDTFKNIHAMQPDAIITRHAFSSAPFKLAEFSQCPLINAGSGVSAHPTQALLDLLTLYQHFGSLENLKGKKIAFIGDVKNSRVANSNIKLLQRLGLEIMLCAPSSMLPTTSLKTTHNIEEAIAFADILMSLRTQTERHNAPIFASLKDYGNAYCITQQRLKAHAKNKEVIILHPGPVHRDIDIESAVLEDERSKVLEQVKNGVAMRMAVLEFLLLD.

R59 and T60 together coordinate carbamoyl phosphate. Residue K87 coordinates L-aspartate. R109, H137, and Q140 together coordinate carbamoyl phosphate. R173 and R223 together coordinate L-aspartate. Carbamoyl phosphate contacts are provided by G266 and P267.

It belongs to the aspartate/ornithine carbamoyltransferase superfamily. ATCase family. In terms of assembly, heterododecamer (2C3:3R2) of six catalytic PyrB chains organized as two trimers (C3), and six regulatory PyrI chains organized as three dimers (R2).

It carries out the reaction carbamoyl phosphate + L-aspartate = N-carbamoyl-L-aspartate + phosphate + H(+). It functions in the pathway pyrimidine metabolism; UMP biosynthesis via de novo pathway; (S)-dihydroorotate from bicarbonate: step 2/3. Its function is as follows. Catalyzes the condensation of carbamoyl phosphate and aspartate to form carbamoyl aspartate and inorganic phosphate, the committed step in the de novo pyrimidine nucleotide biosynthesis pathway. The chain is Aspartate carbamoyltransferase catalytic subunit from Helicobacter pylori (strain HPAG1).